We begin with the raw amino-acid sequence, 217 residues long: GTP-binding protein yptV2 (217 aa).

Position 20-27 (20-27 (GDSGVGKS)) interacts with GTP. The short motif at 42–50 (FITTIGIDF) is the Effector region element. GTP-binding positions include 68-72 (DTAGQ) and 126-129 (NKLD). A disordered region spans residues 198–217 (QPVRLTSGSPSPAQGKSCCR). Over residues 201–211 (RLTSGSPSPAQ) the composition is skewed to polar residues. S-geranylgeranyl cysteine attachment occurs at residues C215 and C216.

The protein belongs to the small GTPase superfamily. Rab family.

The protein resides in the cell membrane. Its function is as follows. Protein transport. Probably involved in vesicular traffic. The sequence is that of GTP-binding protein yptV2 (YPTV2) from Volvox carteri (Green alga).